We begin with the raw amino-acid sequence, 292 residues long: Protease HtpX homolog (292 aa).

The next 2 membrane-spanning stretches (helical) occupy residues 4 to 24 (IALF…VASL) and 38 to 58 (LGAL…ISLL). Position 144 (His-144) interacts with Zn(2+). Glu-145 is an active-site residue. His-148 serves as a coordination point for Zn(2+). 2 consecutive transmembrane segments (helical) span residues 152–172 (GDMV…VFLS) and 199–219 (ITTI…VAWF). Glu-224 lines the Zn(2+) pocket.

This sequence belongs to the peptidase M48B family. Zn(2+) serves as cofactor.

The protein localises to the cell inner membrane. This Acidovorax ebreus (strain TPSY) (Diaphorobacter sp. (strain TPSY)) protein is Protease HtpX homolog.